The sequence spans 954 residues: MSLPLTEEQRKKIEENRQKALARRAEKLLAEQHQRTSSGTSIAGNPFQAKQGPSQNFPRESCKPVSHGVIFKQQNLSSSSNADQRPHDSHSFQAKGIWKKPEEMPTACPGHSPRSQMALTGISPPLAQSPPEVPKQQLLSYELGQGHAQASPEIRFTPFANPTHKPLAKPKSSQETPAHSSGQPPRDAKLEAKTAKASPSGQNISYIHSSSESVTPRTEGRLQQKSGSSVQKGVNSQKGKCVRNGDRFQVLIGYNAELIAVFKTLPSKNYDPDTKTWNFSMNDYSALMKAAQSLPTVNLQPLEWAYGSSESPSTSSEGQAGLPSAPSLSFVKGRCMLISRAYFEADISYSQDLIALFKQMDSRRYDVKTRKWSFLLEEHSKLIAKVRCLPQVQLDPLPTTLTLAFASQLKKTSLSLTPDVPEADLSEVDPKLVSNLMPFQRAGVNFAIAKGGRLLLADDMGLGKTIQAICIAAFYRKEWPLLVVVPSSVRFTWEQAFLRWLPSLSPDCINVVVTGKDRLTAGLINIVSFDLLSKLEKQLKTPFKVVIIDESHFLKNSRTARCRAAMPVLKVAKRVILLSGTPAMSRPAELYTQIIAVKPTFFPQFHAFGLRYCDAKRMPWGWDYSGSSNLGELKLLLEEAVMLRRLKSDVLSQLPAKQRKIVVIAPGRINARTRAALDAAAKEMTTKDKTKQQQKDALILFFNRTAEAKIPSVIEYILDLLESGREKFLVFAHHKVVLDAITQELERKHVQHIRIDGSTSSAEREDLCQQFQLSERHAVAVLSITAANMGLTFSSADLVVFAELFWNPGVLIQAEDRVHRIGQTSSVGIHYLVAKGTADDYLWPLIQEKIKVLAEAGLSETNFSEMTESTDYLYKDPKQQKIYDLFQKSFEKEGSDMELLEAAESFDPGSASGTSGSSSQNMGDTLDESSLTASPQKKRRFEFFDNWDSFTSPL.

Disordered regions lie at residues Met-1–Ala-20 and Lys-27–Lys-238. An N-acetylserine modification is found at Ser-2. The stretch at Leu-3–Gln-34 forms a coiled coil. The tract at residues Leu-5 to Ala-30 is mediates interaction with RPA2. Over residues Glu-7 to Ala-20 the composition is skewed to basic and acidic residues. A compositionally biased stretch (polar residues) spans Lys-72–Asp-83. Phosphoserine is present on residues Ser-112, Ser-123, Ser-129, and Ser-151. Composition is skewed to polar residues over residues Lys-171–Gln-183 and Ala-197–Lys-238. Ser-198 is subject to Phosphoserine. HARP domains are found at residues Ser-226–Glu-303 and Ser-327–Pro-398. The 156-residue stretch at Asn-445 to Thr-600 folds into the Helicase ATP-binding domain. Asp-458–Thr-465 lines the ATP pocket. The DESH box signature appears at Asp-549 to His-552. The Nuclear localization signal signature appears at Arg-644–Ile-661. The 154-residue stretch at Tyr-716–Ser-869 folds into the Helicase C-terminal domain. Residues Glu-904–Ser-934 form a disordered region. A compositionally biased stretch (low complexity) spans Gly-909–Ser-919. A compositionally biased stretch (polar residues) spans Gln-920–Ser-934.

Belongs to the SNF2/RAD54 helicase family. SMARCAL1 subfamily. Interacts with RPA2; the interaction is direct and mediates the recruitment by the RPA complex of SMARCAL1 to sites of DNA damage. In terms of processing, DNA damage-regulated phosphorylation by kinases that may include ATM, ATR and PRKDC. Ubiquitously expressed, with high levels in testis.

Its subcellular location is the nucleus. It catalyses the reaction ATP + H2O = ADP + phosphate + H(+). Functionally, ATP-dependent annealing helicase that binds selectively to fork DNA relative to ssDNA or dsDNA and catalyzes the rewinding of the stably unwound DNA. Rewinds single-stranded DNA bubbles that are stably bound by replication protein A (RPA). Acts throughout the genome to reanneal stably unwound DNA, performing the opposite reaction of many enzymes, such as helicases and polymerases, that unwind DNA. May play an important role in DNA damage response by acting at stalled replication forks. The sequence is that of SWI/SNF-related matrix-associated actin-dependent regulator of chromatin subfamily A-like protein 1 from Homo sapiens (Human).